The sequence spans 326 residues: 5,10-methylenetetrahydromethanopterin reductase (326 aa).

Belongs to the mer family.

The protein resides in the cytoplasm. It catalyses the reaction 5-methyl-5,6,7,8-tetrahydromethanopterin + oxidized coenzyme F420-(gamma-L-Glu)(n) + H(+) = 5,10-methylenetetrahydromethanopterin + reduced coenzyme F420-(gamma-L-Glu)(n). It participates in one-carbon metabolism; methanogenesis from CO(2); methyl-coenzyme M from 5,10-methylene-5,6,7,8-tetrahydromethanopterin: step 1/2. Catalyzes the reversible reduction of methylene-H(4)MPT to methyl-H(4)MPT. The protein is 5,10-methylenetetrahydromethanopterin reductase of Methanolobus tindarius.